A 940-amino-acid polypeptide reads, in one-letter code: UvrABC system protein A (940 aa).

31 to 38 contributes to the ATP binding site; that stretch reads GLSGSGKS. Residues 252–279 form a C4-type zinc finger; that stretch reads CPHCGYSMQELEPRLFSFNNPAGACGTC. ABC transporter domains lie at 309–586 and 606–936; these read WDQK…PDSL and RDKN…RFLK. ATP is bound at residue 639 to 646; sequence GVSGSGKS. A C4-type zinc finger spans residues 739 to 765; it reads CEACQGDGVIKVEMHFLPDVYVPCDVC.

This sequence belongs to the ABC transporter superfamily. UvrA family. As to quaternary structure, forms a heterotetramer with UvrB during the search for lesions.

Its subcellular location is the cytoplasm. The UvrABC repair system catalyzes the recognition and processing of DNA lesions. UvrA is an ATPase and a DNA-binding protein. A damage recognition complex composed of 2 UvrA and 2 UvrB subunits scans DNA for abnormalities. When the presence of a lesion has been verified by UvrB, the UvrA molecules dissociate. This Vibrio vulnificus (strain YJ016) protein is UvrABC system protein A.